A 404-amino-acid chain; its full sequence is Putative nitronate monooxygenase (404 aa).

41 to 43 contacts FMN; that stretch reads PMA. The active-site Proton acceptor is the His-224. His-224 serves as a coordination point for substrate. FMN contacts are provided by residues 270–272 and 293–294; these read AGG and GT.

Belongs to the nitronate monooxygenase family. NMO class I subfamily. The cofactor is FMN.

Its subcellular location is the cytoplasm. It carries out the reaction ethylnitronate + O2 = chemical entity + acetaldehyde + nitrite + H(+). Functionally, catalyzes the oxidation of alkyl nitronates to produce the corresponding carbonyl compounds and nitrites. This chain is Putative nitronate monooxygenase, found in Saccharomyces cerevisiae (strain ATCC 204508 / S288c) (Baker's yeast).